The primary structure comprises 135 residues: Interleukin-4 (135 aa).

The signal sequence occupies residues 1-24 (MGLTYQLIPVLVCLLVCTSHLVHG). Disulfide bonds link Cys27–Cys135, Cys48–Cys85, and Cys70–Cys105. Asn62 is a glycosylation site (N-linked (GlcNAc...) asparagine).

Belongs to the IL-4/IL-13 family.

The protein localises to the secreted. Its function is as follows. Participates in at least several B-cell activation processes as well as of other cell types. It is a costimulator of DNA-synthesis. It induces the expression of class II MHC molecules on resting B-cells. It enhances both secretion and cell surface expression of IgE and IgG1. It also regulates the expression of the low affinity Fc receptor for IgE (CD23) on both lymphocytes and monocytes. Positively regulates IL31RA expression in macrophages. Stimulates autophagy in dendritic cells by interfering with mTORC1 signaling and through the induction of RUFY4. The polypeptide is Interleukin-4 (IL4) (Bubalus bubalis (Domestic water buffalo)).